Here is a 539-residue protein sequence, read N- to C-terminus: UDP-N-acetylmuramate--L-alanine ligase (539 aa).

Residue 165 to 171 (GTHGKTT) participates in ATP binding.

It belongs to the MurCDEF family.

The protein resides in the cytoplasm. The catalysed reaction is UDP-N-acetyl-alpha-D-muramate + L-alanine + ATP = UDP-N-acetyl-alpha-D-muramoyl-L-alanine + ADP + phosphate + H(+). It functions in the pathway cell wall biogenesis; peptidoglycan biosynthesis. In terms of biological role, cell wall formation. The protein is UDP-N-acetylmuramate--L-alanine ligase of Trichodesmium erythraeum (strain IMS101).